The chain runs to 176 residues: NAD(P)H-quinone oxidoreductase subunit J (176 aa).

It belongs to the complex I 30 kDa subunit family. In terms of assembly, NDH-1 can be composed of about 15 different subunits; different subcomplexes with different compositions have been identified which probably have different functions.

It is found in the cellular thylakoid membrane. The catalysed reaction is a plastoquinone + NADH + (n+1) H(+)(in) = a plastoquinol + NAD(+) + n H(+)(out). It carries out the reaction a plastoquinone + NADPH + (n+1) H(+)(in) = a plastoquinol + NADP(+) + n H(+)(out). Functionally, NDH-1 shuttles electrons from an unknown electron donor, via FMN and iron-sulfur (Fe-S) centers, to quinones in the respiratory and/or the photosynthetic chain. The immediate electron acceptor for the enzyme in this species is believed to be plastoquinone. Couples the redox reaction to proton translocation, and thus conserves the redox energy in a proton gradient. Cyanobacterial NDH-1 also plays a role in inorganic carbon-concentration. In Prochlorococcus marinus (strain MIT 9515), this protein is NAD(P)H-quinone oxidoreductase subunit J.